The primary structure comprises 227 residues: Orotidine 5'-phosphate decarboxylase (227 aa).

Substrate is bound by residues aspartate 8, lysine 30, 59–68, threonine 118, arginine 178, glutamine 187, glycine 207, and arginine 208; that span reads DLKLYDIPYT. Residue lysine 61 is the Proton donor of the active site.

Belongs to the OMP decarboxylase family. Type 1 subfamily. As to quaternary structure, homodimer.

It catalyses the reaction orotidine 5'-phosphate + H(+) = UMP + CO2. It participates in pyrimidine metabolism; UMP biosynthesis via de novo pathway; UMP from orotate: step 2/2. Functionally, catalyzes the decarboxylation of orotidine 5'-monophosphate (OMP) to uridine 5'-monophosphate (UMP). The sequence is that of Orotidine 5'-phosphate decarboxylase from Helicobacter pylori (strain Shi470).